The chain runs to 313 residues: Porphobilinogen deaminase (313 aa).

S-(dipyrrolylmethanemethyl)cysteine is present on Cys242.

Belongs to the HMBS family. As to quaternary structure, monomer. The cofactor is dipyrromethane.

It catalyses the reaction 4 porphobilinogen + H2O = hydroxymethylbilane + 4 NH4(+). It functions in the pathway porphyrin-containing compound metabolism; protoporphyrin-IX biosynthesis; coproporphyrinogen-III from 5-aminolevulinate: step 2/4. Its function is as follows. Tetrapolymerization of the monopyrrole PBG into the hydroxymethylbilane pre-uroporphyrinogen in several discrete steps. This Pseudomonas putida (strain W619) protein is Porphobilinogen deaminase.